The primary structure comprises 201 residues: MSKVLVLKSSILAGYSQSNQLSDYFVEQWREKHSADEITVRDLAANPIPVLDGELVGALRPSDAPLTPRQQEALALSDELIAELKAHDVIVIAAPMYNFNISTQLKNYFDLVARAGVTFRYTENGPEGLVTGKKAIVITSRGGIHKDGPTDLVTPYLSTFLGFIGITDVKFVFAEGIAYGPEMAAKAQSDAKAAIDSIVAA.

FMN-binding positions include Ser10, 16 to 18 (SQS), 96 to 99 (MYNF), and 140 to 143 (SRGG).

Belongs to the azoreductase type 1 family. Homodimer. The cofactor is FMN.

The catalysed reaction is 2 a quinone + NADH + H(+) = 2 a 1,4-benzosemiquinone + NAD(+). It catalyses the reaction N,N-dimethyl-1,4-phenylenediamine + anthranilate + 2 NAD(+) = 2-(4-dimethylaminophenyl)diazenylbenzoate + 2 NADH + 2 H(+). Quinone reductase that provides resistance to thiol-specific stress caused by electrophilic quinones. Its function is as follows. Also exhibits azoreductase activity. Catalyzes the reductive cleavage of the azo bond in aromatic azo compounds to the corresponding amines. This is FMN-dependent NADH:quinone oxidoreductase from Shigella boydii serotype 4 (strain Sb227).